Consider the following 363-residue polypeptide: Palmitoyltransferase ZDHHC9 (363 aa).

Residues 1–35 (MSVMVVRKKVTRKWEKLPGRNTFCCDGRVMMARQK) lie on the Cytoplasmic side of the membrane. Residues 36–56 (GIFYLTLFLILGTCTLFFAFE) traverse the membrane as a helical segment. At 57–63 (CRYLAVQ) the chain is on the lumenal side. Residues 64–84 (LSPAIPVFAAMLFLFSMATLL) form a helical membrane-spanning segment. At 85–183 (RTSFSDPGVI…NCVGKRNYRY (99 aa)) the chain is on the cytoplasmic side. Residues 139 to 189 (KYCYTCKIFRPPRASHCSICDNCVERFDHHCPWVGNCVGKRNYRYFYLFIL) enclose the DHHC domain. The active-site S-palmitoyl cysteine intermediate is cysteine 169. Residues 184-204 (FYLFILSLSLLTIYVFAFNIV) form a helical membrane-spanning segment. At 205–228 (YVALKSLKIGFLETLKETPGTVLE) the chain is on the lumenal side. A helical membrane pass occupies residues 229–249 (VLICFFTLWSVVGLTGFHTFL). The Cytoplasmic segment spans residues 250-363 (VALNQTTNED…PPQEVTEAEK (114 aa)). A disordered region spans residues 303–363 (PLEESGSRPP…PPQEVTEAEK (61 aa)). Over residues 310–322 (RPPSTQEASTSLL) the composition is skewed to polar residues. The segment covering 345-355 (EMPPPEPPEPP) has biased composition (pro residues).

The protein belongs to the DHHC palmitoyltransferase family. ERF2/ZDHHC9 subfamily. As to quaternary structure, interacts with GOLGA7.

It localises to the endoplasmic reticulum membrane. Its subcellular location is the golgi apparatus membrane. It carries out the reaction L-cysteinyl-[protein] + hexadecanoyl-CoA = S-hexadecanoyl-L-cysteinyl-[protein] + CoA. Functionally, palmitoyltransferase that catalyzes the addition of palmitate onto various protein substrates, such as ADRB2, GSDMD, HRAS, NRAS and CGAS. The ZDHHC9-GOLGA7 complex is a palmitoyltransferase specific for HRAS and NRAS. May have a palmitoyltransferase activity toward the beta-2 adrenergic receptor/ADRB2 and therefore regulate G protein-coupled receptor signaling. Acts as a regulator of innate immunity by catalyzing palmitoylation of CGAS, thereby promoting CGAS homodimerization and cyclic GMP-AMP synthase activity. Activates pyroptosis by catalyzing palmitoylation of gasdermin-D (GSDMD), thereby promoting membrane translocation and pore formation of GSDMD. In Bos taurus (Bovine), this protein is Palmitoyltransferase ZDHHC9 (ZDHHC9).